Reading from the N-terminus, the 597-residue chain is Aspartate--tRNA(Asp/Asn) ligase (597 aa).

Position 172 (E172) interacts with L-aspartate. The aspartate stretch occupies residues 196 to 199 (QLFK). R218 contacts L-aspartate. Residues 218 to 220 (RDE) and Q227 each bind ATP. H454 lines the L-aspartate pocket. E488 provides a ligand contact to ATP. L-aspartate is bound at residue R495. Residue 540-543 (GLDR) participates in ATP binding.

This sequence belongs to the class-II aminoacyl-tRNA synthetase family. Type 1 subfamily. In terms of assembly, homodimer.

It localises to the cytoplasm. The catalysed reaction is tRNA(Asx) + L-aspartate + ATP = L-aspartyl-tRNA(Asx) + AMP + diphosphate. In terms of biological role, aspartyl-tRNA synthetase with relaxed tRNA specificity since it is able to aspartylate not only its cognate tRNA(Asp) but also tRNA(Asn). Reaction proceeds in two steps: L-aspartate is first activated by ATP to form Asp-AMP and then transferred to the acceptor end of tRNA(Asp/Asn). This Chromobacterium violaceum (strain ATCC 12472 / DSM 30191 / JCM 1249 / CCUG 213 / NBRC 12614 / NCIMB 9131 / NCTC 9757 / MK) protein is Aspartate--tRNA(Asp/Asn) ligase.